The sequence spans 356 residues: Carbohydrate sulfotransferase 10 (356 aa).

Over 1–6 (MHHQWL) the chain is Cytoplasmic. Residues 7–27 (LLAACFWVIFMFMVASKFITL) traverse the membrane as a helical; Signal-anchor for type II membrane protein segment. The Lumenal segment spans residues 28 to 356 (TFKDPDGYSA…GYQKPDFLLN (329 aa)). N99 carries an N-linked (GlcNAc...) asparagine glycan. 3'-phosphoadenylyl sulfate contacts are provided by residues 127 to 133 (PKVGNTQ) and 189 to 197 (RDPFERLIS). N-linked (GlcNAc...) asparagine glycans are attached at residues N228 and N316.

Belongs to the sulfotransferase 2 family. As to expression, in myogenic progenitors, it is ubiquitously expressed.

The protein localises to the golgi apparatus membrane. It catalyses the reaction 3-O-{beta-D-GlcA-(1-&gt;[3)-alpha-D-Xyl-(1-&gt;3)-beta-D-GlcA-(1-&gt;](n)-4)-beta-D-Xyl-(1-&gt;4)-Rib-ol-P-Rib-ol-P-3-beta-D-GalNAc-(1-&gt;3)-beta-D-GlcNAc-(1-&gt;4)-O-6-P-alpha-D-Man}-L-Thr-[protein] + 3'-phosphoadenylyl sulfate = 3-O-{O-3-S-beta-D-GlcA-(1-&gt;[3)-alpha-D-Xyl-(1-&gt;3)-beta-D-GlcA-(1-&gt;](n)-4)-beta-D-Xyl-(1-&gt;4)-Rib-ol-P-Rib-ol-P-3-beta-D-GalNAc-(1-&gt;3)-beta-D-GlcNAc-(1-&gt;4)-O-6-P-alpha-D-Man}-L-Thr-[protein] + adenosine 3',5'-bisphosphate + H(+). It carries out the reaction 17beta-estradiol 3-O-(beta-D-glucuronate) + 3'-phosphoadenylyl sulfate = 17beta-estradiol 3-O-(3-sulfo-beta-D-glucuronate) + adenosine 3',5'-bisphosphate + H(+). The catalysed reaction is 17beta-estradiol 3-O-(beta-D-glucuronate) 17-sulfate + 3'-phosphoadenylyl sulfate = 17beta-estradiol 3-O-(3-sulfo-beta-D-glucuronate) 17-sulfate + adenosine 3',5'-bisphosphate + H(+). The enzyme catalyses 17beta-estradiol 17-O-(beta-D-glucuronate) + 3'-phosphoadenylyl sulfate = 17beta-estradiol 17-O-(3-sulfo-beta-D-glucuronate) + adenosine 3',5'-bisphosphate + H(+). It catalyses the reaction 16alpha,17beta-estriol 3-O-(beta-D-glucuronate) + 3'-phosphoadenylyl sulfate = 16alpha,17beta-estriol 3-O-(3-sulfo-beta-D-glucuronate) + adenosine 3',5'-bisphosphate + H(+). It carries out the reaction 16alpha,17beta-estriol 16-O-(beta-D-glucuronate) + 3'-phosphoadenylyl sulfate = 16alpha,17beta-estriol 16-O-(3-sulfo-beta-D-glucuronate) + adenosine 3',5'-bisphosphate + H(+). The catalysed reaction is 16alpha,17beta-estriol 17-O-(beta-D-glucuronate) + 3'-phosphoadenylyl sulfate = 16alpha,17beta-estriol 17-O-(3-sulfo-beta-D-glucuronate) + adenosine 3',5'-bisphosphate + H(+). The enzyme catalyses estrone 3-O-(beta-D-glucuronate) + 3'-phosphoadenylyl sulfate = estrone 3-O-(3-sulfo-beta-D-glucuronate) + adenosine 3',5'-bisphosphate + H(+). It catalyses the reaction 3alpha,20alpha-dihydroxy-5beta-pregnane 3-O-(beta-D-glucuronate) + 3'-phosphoadenylyl sulfate = 3alpha,20alpha-dihydroxy-5beta-pregnane 3-O-(3-sulfo-beta-D-glucuronate) + adenosine 3',5'-bisphosphate + H(+). It carries out the reaction testosterone 17-O-(beta-D-glucuronate) + 3'-phosphoadenylyl sulfate = testosterone 17-O-(3-sulfo-beta-D-glucuronate) + adenosine 3',5'-bisphosphate + H(+). The catalysed reaction is 3beta-androst-5-en-17-one 3-O-(beta-D-glucuronate) + 3'-phosphoadenylyl sulfate = 3beta-androst-5-en-17-one 3-O-(3-sulfo-beta-D-glucuronate) + adenosine 3',5'-bisphosphate + H(+). The enzyme catalyses 3alpha,17alpha-dihydroxy-5beta-androstane-11-one-17beta-carboxylate 3-O-(beta-D-glucuronate) + 3'-phosphoadenylyl sulfate = 3alpha,17alpha-dihydroxy-5beta-androstane-11-one-17beta-carboxylate 3-O-(3-sulfo-beta-D-glucuronate) + adenosine 3',5'-bisphosphate + H(+). It catalyses the reaction 3alpha-hydroxyetiocholan-17-one 3-O-(beta-D-glucuronate) + 3'-phosphoadenylyl sulfate = 3alpha-hydroxyetiocholan-17-one 3-O-(3-sulfo-beta-D-glucuronate) + adenosine 3',5'-bisphosphate + H(+). Its pathway is steroid metabolism. It functions in the pathway protein modification; carbohydrate sulfation. Functionally, catalyzes the transfer of sulfate from 3'-phosphoadenylyl sulfate (PAPS) to position 3 of terminal glucuronic acid of both protein- and lipid-linked oligosaccharides. Participates in biosynthesis of HNK-1 carbohydrate structure 3-O-sulfo-beta-D-GlcA-(1-&gt;3)-beta-D-Gal-(1-&gt;4)-D-GlcNAc-R, a sulfated glucuronyl-lactosaminyl residue carried by many neural recognition molecules, which is involved in cell interactions during ontogenetic development and in synaptic plasticity in the adult. May be indirectly involved in synapse plasticity of the hippocampus, via its role in HNK-1 biosynthesis. Sulfates terminal glucuronyl residue of the laminin globular (LG)-domain binding epitope on DAG1/alpha-dystroglycan and prevents further polymerization by LARGE1 glycosyltransferase. Likely defines the chain length of LG epitope, conferring binding specificity to extracellular matrix components. Plays a role in down-regulating the steroid hormones. Sulfates glucuronidated estrogens and androgens with an impact in hormone cycle and fertility. Has a preference for glucuronyl moiety at the 3-hydroxyl group of a sterol ring rather than the 17-hydroxyl group, showing high catalytic efficiency for 17beta-estradiol 3-O-(beta-D-glucuronate) and dehydroepiandrosterone 3-O-(beta-D-glucuronate) hormones. The chain is Carbohydrate sulfotransferase 10 (Chst10) from Rattus norvegicus (Rat).